The following is a 453-amino-acid chain: UDP-N-acetylmuramoylalanine--D-glutamate ligase (453 aa).

117 to 123 (GTNGKTT) is a binding site for ATP.

The protein belongs to the MurCDEF family.

It localises to the cytoplasm. It catalyses the reaction UDP-N-acetyl-alpha-D-muramoyl-L-alanine + D-glutamate + ATP = UDP-N-acetyl-alpha-D-muramoyl-L-alanyl-D-glutamate + ADP + phosphate + H(+). The protein operates within cell wall biogenesis; peptidoglycan biosynthesis. Its function is as follows. Cell wall formation. Catalyzes the addition of glutamate to the nucleotide precursor UDP-N-acetylmuramoyl-L-alanine (UMA). This Caldicellulosiruptor saccharolyticus (strain ATCC 43494 / DSM 8903 / Tp8T 6331) protein is UDP-N-acetylmuramoylalanine--D-glutamate ligase.